The sequence spans 435 residues: Glutamyl-tRNA reductase (435 aa).

Substrate is bound by residues 49-52 (TCNR), Ser109, 114-116 (ETQ), and Gln120. The Nucleophile role is filled by Cys50. 189–194 (GAGEMS) contacts NADP(+).

This sequence belongs to the glutamyl-tRNA reductase family. As to quaternary structure, homodimer.

The enzyme catalyses (S)-4-amino-5-oxopentanoate + tRNA(Glu) + NADP(+) = L-glutamyl-tRNA(Glu) + NADPH + H(+). It functions in the pathway porphyrin-containing compound metabolism; protoporphyrin-IX biosynthesis; 5-aminolevulinate from L-glutamyl-tRNA(Glu): step 1/2. Functionally, catalyzes the NADPH-dependent reduction of glutamyl-tRNA(Glu) to glutamate 1-semialdehyde (GSA). This chain is Glutamyl-tRNA reductase, found in Listeria monocytogenes serotype 4b (strain F2365).